The sequence spans 162 residues: Large ribosomal subunit protein uL11 (162 aa).

The interval 1–27 (MAGTIEVLVPGGEANPGPPLGPELGPT) is disordered.

It belongs to the universal ribosomal protein uL11 family. Part of the 50S ribosomal subunit. Forms part of the ribosomal stalk which helps the ribosome interact with GTP-bound translation factors. Forms a heptameric L10(L12)2(L12)2(L12)2 complex, where L10 forms an elongated spine to which 3 L12 dimers bind in a sequential fashion.

Forms part of the ribosomal stalk which helps the ribosome interact with GTP-bound translation factors. This is Large ribosomal subunit protein uL11 from Haloarcula marismortui (strain ATCC 43049 / DSM 3752 / JCM 8966 / VKM B-1809) (Halobacterium marismortui).